A 405-amino-acid chain; its full sequence is Enoyl-[acyl-carrier-protein] reductase [NADH] (405 aa).

NAD(+)-binding positions include 51 to 56, 77 to 78, 114 to 115, and 142 to 143; these read GASSGY, FE, DA, and LA. Y228 provides a ligand contact to substrate. The Proton donor role is filled by Y238. Residues K247 and 276 to 278 each bind NAD(+); that span reads VVT.

It belongs to the TER reductase family. As to quaternary structure, monomer.

It carries out the reaction a 2,3-saturated acyl-[ACP] + NAD(+) = a (2E)-enoyl-[ACP] + NADH + H(+). Its pathway is lipid metabolism; fatty acid biosynthesis. Involved in the final reduction of the elongation cycle of fatty acid synthesis (FAS II). Catalyzes the reduction of a carbon-carbon double bond in an enoyl moiety that is covalently linked to an acyl carrier protein (ACP). This Chromohalobacter salexigens (strain ATCC BAA-138 / DSM 3043 / CIP 106854 / NCIMB 13768 / 1H11) protein is Enoyl-[acyl-carrier-protein] reductase [NADH].